We begin with the raw amino-acid sequence, 279 residues long: GATA transcription factor 15 (279 aa).

The interval A52–A94 is disordered. The span at T58 to V74 shows a compositional bias: low complexity. A GATA-type zinc finger spans residues C154–C179.

It belongs to the type IV zinc-finger family. Class B subfamily. As to expression, highly expressed in inflorescences. Expressed in vascular bundles of root stele within the elongation zones, of elongating upper internodes and of the junctions of leaf blades and sheaths.

Probable transcription factor that regulates organogenesis during transition from the vegetative to the reproductive phase. Regulates the expression of CYP78A11/PLA1, HD3A and MADS1 during reproductive development in rice. May act upstream of CYP78A11/PLA1 during panicle development. Acts independently of the photoperiodic and gibberellin signaling pathways. The sequence is that of GATA transcription factor 15 from Oryza sativa subsp. japonica (Rice).